The following is a 431-amino-acid chain: Bone morphogenetic protein 7 (431 aa).

A signal peptide spans 1 to 29 (MHVRSLRAAAPHSFVALWAPLFLLRSALA). The propeptide occupies 30-292 (DFSLDNEVHS…ATEVHFRSIR (263 aa)). Asn187, Asn302, Asn321, and Asn372 each carry an N-linked (GlcNAc...) asparagine glycan. Residues 291 to 311 (IRSTGSKQRSQNRSKTPKNQE) are disordered. 3 cysteine pairs are disulfide-bonded: Cys330/Cys396, Cys359/Cys428, and Cys363/Cys430.

This sequence belongs to the TGF-beta family. Homodimer; disulfide-linked. Interacts with SOSTDC1. Interacts with TWSG1. Interacts with FBN1 (via N-terminal domain) and FBN2. Interacts with type I receptor ACVR1. Interacts with type II receptor ACVR2A. Interacts with NOG; this interaction inhibits canonical BMP signaling. Interacts with SCUBE3. Interacts with ERFE; the interaction inhibits BMP-induced transcription of HAMP. Interacts with TGFBR3. In terms of processing, several N-termini starting at positions 293, 300, 315 and 316 have been identified by direct sequencing resulting in secretion of different mature forms. Expressed in the kidney and bladder. Lower levels seen in the brain.

The protein resides in the secreted. Functionally, growth factor of the TGF-beta superfamily that plays important role in various biological processes, including embryogenesis, hematopoiesis, neurogenesis and skeletal morphogenesis. Initiates the canonical BMP signaling cascade by associating with type I receptor ACVR1 and type II receptor ACVR2A. Once all three components are bound together in a complex at the cell surface, ACVR2A phosphorylates and activates ACVR1. In turn, ACVR1 propagates signal by phosphorylating SMAD1/5/8 that travel to the nucleus and act as activators and repressors of transcription of target genes. For specific functions such as growth cone collapse in developing spinal neurons and chemotaxis of monocytes, also uses BMPR2 as type II receptor. Can also signal through non-canonical pathways such as P38 MAP kinase signaling cascade that promotes brown adipocyte differentiation through activation of target genes, including members of the SOX family of transcription factors. Promotes the expression of HAMP, this is repressed by its interaction with ERFE. This chain is Bone morphogenetic protein 7 (BMP7), found in Homo sapiens (Human).